Reading from the N-terminus, the 1048-residue chain is 3-hydroxy-3-methylglutaryl-coenzyme A reductase (1048 aa).

Topologically, residues 1-32 (MDPVVRKPDPGGVQHRVTKALRAIVGHACRHP) are cytoplasmic. A helical membrane pass occupies residues 33 to 53 (IHTLLVTALTAATTHLHVLEG). The Lumenal portion of the chain corresponds to 54–220 (TYQATHRGLA…FLHRVHHAET (167 aa)). The helical transmembrane segment at 221–241 (VDLVIIGLSYLAMNMTVVSLF) threads the bilayer. The 182-residue stretch at 222–403 (DLVIIGLSYL…FTFYATILCV (182 aa)) folds into the SSD domain. Residues 242–250 (RVMRHLGSR) lie on the Cytoplasmic side of the membrane. The chain crosses the membrane as a helical span at residues 251 to 271 (FWLAASVLLSGAFAFVLGLGI). At 272-276 (TTTCD) the chain is on the lumenal side. The chain crosses the membrane as a helical span at residues 277-297 (VPVDMLLLFEGIPYLVLTVGF). The Cytoplasmic portion of the chain corresponds to 298 to 348 (EKPIQLTRAVLCVSEELWGGGQRQVPNGASSDDSRQNQLIPNIIQLAVDRE). A helical membrane pass occupies residues 349-369 (GWYIVRSYLLEIGALALGAVL). Over 370 to 377 (RPKDSLGH) the chain is Lumenal. A helical membrane pass occupies residues 378–398 (FCFLAAWTLLIDAVLLFTFYA). The Cytoplasmic segment spans residues 399-439 (TILCVKLEITRIRSPGGLGQVNAKHPSGIFGHKVKSTNITW). Residues 440–460 (WKLLTVGGFVLCHFLQLSPFF) traverse the membrane as a helical segment. The Lumenal segment spans residues 461 to 542 (YRVMGEYMAN…LDGLESPLGR (82 aa)). Residues Asn470 and Asn520 are each glycosylated (N-linked (GlcNAc...) asparagine). A helical membrane pass occupies residues 543–563 (LCLMGALVVSLVLNNHLIHAA). Topologically, residues 564–1048 (RWHAWPQARE…NRSAGATVKK (485 aa)) are cytoplasmic. Glu729 functions as the Charge relay system in the catalytic mechanism. Position 735 to 741 (735 to 741 (SASRGCK)) interacts with CoA. NADP(+) contacts are provided by residues 796 to 798 (SRF) and 823 to 831 (DAMGMNMIS). The active-site Charge relay system is the Lys863. CoA is bound at residue 892-894 (VLK). Asp939 (charge relay system) is an active-site residue. 1034–1035 (AH) is a binding site for CoA. Catalysis depends on His1035, which acts as the Proton donor. 1039–1040 (NR) contributes to the NADP(+) binding site.

It belongs to the HMG-CoA reductase family.

It localises to the endoplasmic reticulum membrane. It catalyses the reaction (R)-mevalonate + 2 NADP(+) + CoA = (3S)-3-hydroxy-3-methylglutaryl-CoA + 2 NADPH + 2 H(+). It functions in the pathway metabolic intermediate biosynthesis; (R)-mevalonate biosynthesis; (R)-mevalonate from acetyl-CoA: step 3/3. HMG-CoA reductase; part of the first module of ergosterol biosynthesis pathway that includes the early steps of the pathway, conserved across all eukaryotes, and which results in the formation of mevalonate from acetyl-coenzyme A (acetyl-CoA). In this module, the cytosolic acetyl-CoA acetyltransferase catalyzes the formation of acetoacetyl-CoA. The hydroxymethylglutaryl-CoA synthase then condenses acetyl-CoA with acetoacetyl-CoA to form HMG-CoA. The rate-limiting step of the early module is the reduction to mevalonate by the 3-hydroxy-3-methylglutaryl-coenzyme A (HMG-CoA) reductase. The chain is 3-hydroxy-3-methylglutaryl-coenzyme A reductase from Aspergillus terreus.